The chain runs to 226 residues: MKNIQKILPLYFVAGTQDCRHLGENLSENLLFVLKQALEGGITCFQFRDKGKFSLEHTPSAQKALAINCRDLCREYGVPFIVDDNVDLALAIEADGIHVGQSDMPVQEIRAKTDKPLIIGWSVNRLDEAKIGENLAEIDYFGIGPIFPTQSKENPKPTLGMAFIQTLRNAGITKPLVAIGGVKLAHVKTLREFGADGVAVITAITHADNVQAATKALREASDEYAK.

Residues 46 to 50 and Asp83 each bind 4-amino-2-methyl-5-(diphosphooxymethyl)pyrimidine; that span reads QFRDK. 2 residues coordinate Mg(2+): Asp84 and Asp103. A 4-amino-2-methyl-5-(diphosphooxymethyl)pyrimidine-binding site is contributed by Ser122. 2-[(2R,5Z)-2-carboxy-4-methylthiazol-5(2H)-ylidene]ethyl phosphate is bound at residue 149-151; the sequence is TQS. Lys152 contributes to the 4-amino-2-methyl-5-(diphosphooxymethyl)pyrimidine binding site. Residues Gly181 and 201-202 contribute to the 2-[(2R,5Z)-2-carboxy-4-methylthiazol-5(2H)-ylidene]ethyl phosphate site; that span reads IT.

Belongs to the thiamine-phosphate synthase family. The cofactor is Mg(2+).

The catalysed reaction is 2-[(2R,5Z)-2-carboxy-4-methylthiazol-5(2H)-ylidene]ethyl phosphate + 4-amino-2-methyl-5-(diphosphooxymethyl)pyrimidine + 2 H(+) = thiamine phosphate + CO2 + diphosphate. The enzyme catalyses 2-(2-carboxy-4-methylthiazol-5-yl)ethyl phosphate + 4-amino-2-methyl-5-(diphosphooxymethyl)pyrimidine + 2 H(+) = thiamine phosphate + CO2 + diphosphate. It carries out the reaction 4-methyl-5-(2-phosphooxyethyl)-thiazole + 4-amino-2-methyl-5-(diphosphooxymethyl)pyrimidine + H(+) = thiamine phosphate + diphosphate. It functions in the pathway cofactor biosynthesis; thiamine diphosphate biosynthesis; thiamine phosphate from 4-amino-2-methyl-5-diphosphomethylpyrimidine and 4-methyl-5-(2-phosphoethyl)-thiazole: step 1/1. Its function is as follows. Condenses 4-methyl-5-(beta-hydroxyethyl)thiazole monophosphate (THZ-P) and 2-methyl-4-amino-5-hydroxymethyl pyrimidine pyrophosphate (HMP-PP) to form thiamine monophosphate (TMP). The polypeptide is Thiamine-phosphate synthase (Haemophilus influenzae (strain PittGG)).